The sequence spans 256 residues: Small ribosomal subunit protein eS1 (256 aa).

Residue Ala-2 is modified to N-acetylalanine; partial.

Belongs to the eukaryotic ribosomal protein eS1 family. In terms of assembly, component of the small ribosomal subunit. Mature ribosomes consist of a small (40S) and a large (60S) subunit. The 40S subunit contains about 33 different proteins and 1 molecule of RNA (18S). The 60S subunit contains about 49 different proteins and 3 molecules of RNA (25S, 5.8S and 5S).

Its subcellular location is the cytoplasm. The protein is Small ribosomal subunit protein eS1 of Laccaria bicolor (strain S238N-H82 / ATCC MYA-4686) (Bicoloured deceiver).